A 139-amino-acid polypeptide reads, in one-letter code: D-ribose pyranase (139 aa).

His20 (proton donor) is an active-site residue. Substrate is bound by residues Asp28, His106, and Tyr128–Asn130.

Belongs to the RbsD / FucU family. RbsD subfamily. As to quaternary structure, homodecamer.

It is found in the cytoplasm. It carries out the reaction beta-D-ribopyranose = beta-D-ribofuranose. The protein operates within carbohydrate metabolism; D-ribose degradation; D-ribose 5-phosphate from beta-D-ribopyranose: step 1/2. Its function is as follows. Catalyzes the interconversion of beta-pyran and beta-furan forms of D-ribose. This Enterobacter sp. (strain 638) protein is D-ribose pyranase.